Reading from the N-terminus, the 876-residue chain is Valine--tRNA ligase (876 aa).

Positions Pro43–His53 match the 'HIGH' region motif. Positions Lys534–Ser538 match the 'KMSKS' region motif. Residue Lys537 participates in ATP binding. The stretch at Pro847–Ser876 forms a coiled coil.

Belongs to the class-I aminoacyl-tRNA synthetase family. ValS type 1 subfamily. Monomer.

Its subcellular location is the cytoplasm. The catalysed reaction is tRNA(Val) + L-valine + ATP = L-valyl-tRNA(Val) + AMP + diphosphate. Functionally, catalyzes the attachment of valine to tRNA(Val). As ValRS can inadvertently accommodate and process structurally similar amino acids such as threonine, to avoid such errors, it has a 'posttransfer' editing activity that hydrolyzes mischarged Thr-tRNA(Val) in a tRNA-dependent manner. The polypeptide is Valine--tRNA ligase (Christiangramia forsetii (strain DSM 17595 / CGMCC 1.15422 / KT0803) (Gramella forsetii)).